Here is a 421-residue protein sequence, read N- to C-terminus: Serine--tRNA ligase (421 aa).

229-231 (TAE) contacts L-serine. 260–262 (RAE) is an ATP binding site. E283 lines the L-serine pocket. An ATP-binding site is contributed by 347 to 350 (EISS). S383 contacts L-serine.

The protein belongs to the class-II aminoacyl-tRNA synthetase family. Type-1 seryl-tRNA synthetase subfamily. As to quaternary structure, homodimer. The tRNA molecule binds across the dimer.

The protein localises to the cytoplasm. The catalysed reaction is tRNA(Ser) + L-serine + ATP = L-seryl-tRNA(Ser) + AMP + diphosphate + H(+). It catalyses the reaction tRNA(Sec) + L-serine + ATP = L-seryl-tRNA(Sec) + AMP + diphosphate + H(+). The protein operates within aminoacyl-tRNA biosynthesis; selenocysteinyl-tRNA(Sec) biosynthesis; L-seryl-tRNA(Sec) from L-serine and tRNA(Sec): step 1/1. Its function is as follows. Catalyzes the attachment of serine to tRNA(Ser). Is also able to aminoacylate tRNA(Sec) with serine, to form the misacylated tRNA L-seryl-tRNA(Sec), which will be further converted into selenocysteinyl-tRNA(Sec). The sequence is that of Serine--tRNA ligase from Desulfitobacterium hafniense (strain DSM 10664 / DCB-2).